Reading from the N-terminus, the 341-residue chain is Glycerol-3-phosphate dehydrogenase [NAD(P)+] (341 aa).

4 residues coordinate NADPH: Ser-15, Trp-16, Arg-36, and Lys-110. Sn-glycerol 3-phosphate contacts are provided by Lys-110, Gly-139, and Ser-141. Ala-143 serves as a coordination point for NADPH. Sn-glycerol 3-phosphate is bound by residues Lys-194, Asp-247, Ser-257, Arg-258, and Asn-259. Lys-194 (proton acceptor) is an active-site residue. Residue Arg-258 coordinates NADPH. Residues Val-282 and Glu-284 each contribute to the NADPH site.

Belongs to the NAD-dependent glycerol-3-phosphate dehydrogenase family.

The protein resides in the cytoplasm. It carries out the reaction sn-glycerol 3-phosphate + NAD(+) = dihydroxyacetone phosphate + NADH + H(+). The catalysed reaction is sn-glycerol 3-phosphate + NADP(+) = dihydroxyacetone phosphate + NADPH + H(+). It functions in the pathway membrane lipid metabolism; glycerophospholipid metabolism. Functionally, catalyzes the reduction of the glycolytic intermediate dihydroxyacetone phosphate (DHAP) to sn-glycerol 3-phosphate (G3P), the key precursor for phospholipid synthesis. This chain is Glycerol-3-phosphate dehydrogenase [NAD(P)+], found in Xanthomonas euvesicatoria pv. vesicatoria (strain 85-10) (Xanthomonas campestris pv. vesicatoria).